The chain runs to 471 residues: Cysteine--tRNA ligase (471 aa).

Cysteine 29 is a binding site for Zn(2+). Positions leucine 31–histidine 41 match the 'HIGH' region motif. Zn(2+) is bound by residues cysteine 215, histidine 240, and glutamate 244. Residues lysine 271–serine 275 carry the 'KMSKS' region motif. Residue lysine 274 coordinates ATP.

Belongs to the class-I aminoacyl-tRNA synthetase family. Monomer. The cofactor is Zn(2+).

The protein resides in the cytoplasm. It catalyses the reaction tRNA(Cys) + L-cysteine + ATP = L-cysteinyl-tRNA(Cys) + AMP + diphosphate. This chain is Cysteine--tRNA ligase, found in Nocardioides sp. (strain ATCC BAA-499 / JS614).